The chain runs to 874 residues: Alanine--tRNA ligase (874 aa).

Residues histidine 562, histidine 566, cysteine 665, and histidine 669 each coordinate Zn(2+).

It belongs to the class-II aminoacyl-tRNA synthetase family. The cofactor is Zn(2+).

The protein localises to the cytoplasm. The catalysed reaction is tRNA(Ala) + L-alanine + ATP = L-alanyl-tRNA(Ala) + AMP + diphosphate. Its function is as follows. Catalyzes the attachment of alanine to tRNA(Ala) in a two-step reaction: alanine is first activated by ATP to form Ala-AMP and then transferred to the acceptor end of tRNA(Ala). Also edits incorrectly charged Ser-tRNA(Ala) and Gly-tRNA(Ala) via its editing domain. The sequence is that of Alanine--tRNA ligase from Pseudomonas syringae pv. tomato (strain ATCC BAA-871 / DC3000).